The following is a 465-amino-acid chain: tRNA modification GTPase MnmE (465 aa).

Residues arginine 24, glutamate 84, and lysine 127 each coordinate (6S)-5-formyl-5,6,7,8-tetrahydrofolate. The TrmE-type G domain maps to 223–383 (GLNIVLAGQP…LRGELLRLIG (161 aa)). Asparagine 233 provides a ligand contact to K(+). GTP-binding positions include 233–238 (NVGKSS), 252–258 (TAIAGTT), and 277–280 (DTAG). Serine 237 provides a ligand contact to Mg(2+). Threonine 252, isoleucine 254, and threonine 257 together coordinate K(+). Threonine 258 contacts Mg(2+). Lysine 465 is a (6S)-5-formyl-5,6,7,8-tetrahydrofolate binding site.

This sequence belongs to the TRAFAC class TrmE-Era-EngA-EngB-Septin-like GTPase superfamily. TrmE GTPase family. Homodimer. Heterotetramer of two MnmE and two MnmG subunits. It depends on K(+) as a cofactor.

It localises to the cytoplasm. Its function is as follows. Exhibits a very high intrinsic GTPase hydrolysis rate. Involved in the addition of a carboxymethylaminomethyl (cmnm) group at the wobble position (U34) of certain tRNAs, forming tRNA-cmnm(5)s(2)U34. This chain is tRNA modification GTPase MnmE, found in Janthinobacterium sp. (strain Marseille) (Minibacterium massiliensis).